The primary structure comprises 231 residues: MAIRCVASRKTLAGLKETSSRLLRIRGIQTFTLPDLPYDYGALEPAISGEIMQIHHQKHHQAYVTNYNNALEQLDQAVNKGDASTVVKLQSAIKFNGGGHVNHSIFWKNLAPSSEGGGEPPKGSLGSAIDAHFGSLEGLVKKMSAEGAAVQGSGWVWLGLDKELKKLVVDTTANQDPLVTKGGSLVPLVGIDVWEHAYYLQYKNVRPEYLKNVWKVINWKYASEVYEKENN.

The transit peptide at 1 to 29 (MAIRCVASRKTLAGLKETSSRLLRIRGIQ) directs the protein to the mitochondrion. Mn(2+) is bound by residues histidine 55 and histidine 103. Serine 124 carries the phosphoserine modification. Residues aspartate 192 and histidine 196 each contribute to the Mn(2+) site.

Belongs to the iron/manganese superoxide dismutase family. In terms of assembly, homotetramer. Mn(2+) is required as a cofactor.

Its subcellular location is the mitochondrion matrix. It carries out the reaction 2 superoxide + 2 H(+) = H2O2 + O2. Activated by MTM1. Its function is as follows. Destroys superoxide anion radicals which are normally produced within the cells and which are toxic to biological systems. In Arabidopsis thaliana (Mouse-ear cress), this protein is Superoxide dismutase [Mn] 1, mitochondrial (MSD1).